The chain runs to 521 residues: MDTESQYSGYSYKSGHSRSSRKHRDRRDRHRSKSRDGSRGDKSVTIQAPGEPLLDNESTRGDERDDNWGETTTVVTGTSEHSISHDDLTRIAKDMEDSVPLDCSRHLGVAAGAILALLSFLTPLAFLLLPPLLWREELEPCGTACEGLFISVAFKLLILLLGSWALFFRRPKASLPRVFVLRALLMVLVFLLVISYWLFYGVRILDARERSYQGVVQFAVSLVDALLFVHYLAVVLLELRQLQPQFTLKVVRSTDGASRFYNVGHLSIQRVAVWILEKYYHDFPVYNPALLNLPKSVLAKKVSGFKVYSLGEENSTNNSTGQSRAVIAAAARRRDNSHNEYYYEEAEHERRVRKRRARLVVAVEEAFTHIKRLQEEEQKNPREVMDPREAAQAIFASMARAMQKYLRTTKQQPYHTMESILQHLEFCITHDMTPKAFLERYLAAGPTIQYHKERWLAKQWTLVSEEPVTNGLKDGIVFLLKRQDFSLVVSTKKVPFFKLSEEFVDPKSHKFVMRLQSETSV.

The segment at 1 to 81 is disordered; that stretch reads MDTESQYSGY…TTVVTGTSEH (81 aa). Over 1–108 the chain is Cytoplasmic; sequence MDTESQYSGY…VPLDCSRHLG (108 aa). Basic residues predominate over residues 15–33; the sequence is GHSRSSRKHRDRRDRHRSK. Residues 57 to 67 are compositionally biased toward basic and acidic residues; sequence ESTRGDERDDN. Positions 69 to 81 are enriched in low complexity; sequence GETTTVVTGTSEH. The helical transmembrane segment at 109-129 threads the bilayer; sequence VAAGAILALLSFLTPLAFLLL. At 130–147 the chain is on the extracellular side; that stretch reads PPLLWREELEPCGTACEG. A helical transmembrane segment spans residues 148 to 168; sequence LFISVAFKLLILLLGSWALFF. Topologically, residues 169-178 are cytoplasmic; that stretch reads RRPKASLPRV. The chain crosses the membrane as a helical span at residues 179–199; it reads FVLRALLMVLVFLLVISYWLF. Over 200-217 the chain is Extracellular; it reads YGVRILDARERSYQGVVQ. A helical membrane pass occupies residues 218–238; that stretch reads FAVSLVDALLFVHYLAVVLLE. At 239 to 521 the chain is on the cytoplasmic side; the sequence is LRQLQPQFTL…VMRLQSETSV (283 aa).

It belongs to the Vang family. Homodimer and heterodimer with Vangl1. Interacts through its C-terminal region with the N-terminal half of DVL1, DVL2 and DVL3. The PDZ domain of DVL1, DVL2 and DVL3 is required for the interaction. Variants Glu-255 and Asn-464 impair interaction with the DVL proteins. Also interacts with the PDZ domains of MAGI3, SCRIB/SCRB1 and FZD3. Interacts with PRICKLE3. In terms of tissue distribution, primarily expressed in the brain and epididymis. Not detected in the cochlea of Lp mice.

It localises to the cell membrane. Involved in the control of early morphogenesis and patterning of both axial midline structures and the development of neural plate. Plays a role in the regulation of planar cell polarity, particularly in the orientation of stereociliary bundles in the cochlea. Required for polarization and movement of myocardializing cells in the outflow tract and seems to act via RHOA signaling to regulate this process. Required for cell surface localization of FZD3 and FZD6 in the inner ear. The sequence is that of Vang-like protein 2 (Vangl2) from Mus musculus (Mouse).